Reading from the N-terminus, the 130-residue chain is Small ribosomal subunit protein uS9 (130 aa).

A disordered region spans residues 109–130 (RVKERKKPGLKKARKARQFSKR). Over residues 111–130 (KERKKPGLKKARKARQFSKR) the composition is skewed to basic residues.

This sequence belongs to the universal ribosomal protein uS9 family.

This chain is Small ribosomal subunit protein uS9, found in Mycoplasma mobile (strain ATCC 43663 / 163K / NCTC 11711) (Mesomycoplasma mobile).